Reading from the N-terminus, the 169-residue chain is Large ribosomal subunit protein uL10 (169 aa).

It belongs to the universal ribosomal protein uL10 family. As to quaternary structure, part of the ribosomal stalk of the 50S ribosomal subunit. The N-terminus interacts with L11 and the large rRNA to form the base of the stalk. The C-terminus forms an elongated spine to which L12 dimers bind in a sequential fashion forming a multimeric L10(L12)X complex.

Its function is as follows. Forms part of the ribosomal stalk, playing a central role in the interaction of the ribosome with GTP-bound translation factors. In Orientia tsutsugamushi (strain Ikeda) (Rickettsia tsutsugamushi), this protein is Large ribosomal subunit protein uL10.